Consider the following 236-residue polypeptide: LexA repressor (236 aa).

Residues 26–46 (FDEMKEALDLRSKSGIHRLIT) constitute a DNA-binding region (H-T-H motif). Catalysis depends on for autocatalytic cleavage activity residues S157 and K195.

This sequence belongs to the peptidase S24 family. As to quaternary structure, homodimer.

It carries out the reaction Hydrolysis of Ala-|-Gly bond in repressor LexA.. Represses a number of genes involved in the response to DNA damage (SOS response), including recA and lexA. In the presence of single-stranded DNA, RecA interacts with LexA causing an autocatalytic cleavage which disrupts the DNA-binding part of LexA, leading to derepression of the SOS regulon and eventually DNA repair. The sequence is that of LexA repressor from Azorhizobium caulinodans (strain ATCC 43989 / DSM 5975 / JCM 20966 / LMG 6465 / NBRC 14845 / NCIMB 13405 / ORS 571).